Here is a 1922-residue protein sequence, read N- to C-terminus: Kinesin-related protein 4 (1922 aa).

The 322-residue stretch at 22-343 (KIKVAIRVRP…LQFAKRAKRV (322 aa)) folds into the Kinesin motor domain. Residue 101–108 (GQTSSGKT) coordinates ATP. Residues 448-538 (QKIKKIKNSE…DDEFKDNLNL (91 aa)) are disordered. The span at 456-468 (SENNISSSSSNSS) shows a compositional bias: low complexity. Composition is skewed to acidic residues over residues 469-480 (GEEDDDDKDDEN) and 488-532 (DKDD…DDEF). A coiled-coil region spans residues 562–1712 (QVKVKREDLD…ELESTKQKNL (1151 aa)). The segment at 1887 to 1922 (TSTDNLTTTSTSLKSKSSSNGENKENQNNNIIIKNN) is disordered.

This sequence belongs to the TRAFAC class myosin-kinesin ATPase superfamily. Kinesin family.

It localises to the cytoplasm. The protein localises to the cytoskeleton. In terms of biological role, microtubule-associated force-producing protein that plays a role in organelle transport. Its motor activity is directed toward the microtubule's plus end. Cooperates with dynein in organizing spindle assembly during cell division. The polypeptide is Kinesin-related protein 4 (kif4) (Dictyostelium discoideum (Social amoeba)).